The primary structure comprises 170 residues: Protein ripply3 (170 aa).

A WRPW motif motif is present at residues 40–43 (WRPW). Residues 79 to 114 (HPVRLYMPKSKTSEYLQHMGKKVLANFPVQATIHFY) are ripply homology domain. The span at 143-152 (VNSSRGSGDN) shows a compositional bias: polar residues. The tract at residues 143-170 (VNSSRGSGDNYSVPGGPKRNISSHTGSA) is disordered.

Belongs to the ripply family. As to quaternary structure, interacts with tbx1 and tle4/grg4.

The protein resides in the nucleus. In terms of biological role, acts as a transcriptional corepressor. Negative regulator of the transcriptional activity of tbx1 that plays a key role in pharyngeal development. Plays a role in the formation of the anteroposterior (AP) axis during embryonic development; required to establish the posterolateral border of the pre-placodal ectoderm (PPE) acting downstream of the retinoic acid receptor (RAR) signaling. The chain is Protein ripply3 from Xenopus tropicalis (Western clawed frog).